Reading from the N-terminus, the 299-residue chain is 4-hydroxy-tetrahydrodipicolinate synthase (299 aa).

T47 contributes to the pyruvate binding site. Catalysis depends on Y136, which acts as the Proton donor/acceptor. K164 serves as the catalytic Schiff-base intermediate with substrate. A205 serves as a coordination point for pyruvate.

It belongs to the DapA family. In terms of assembly, homotetramer; dimer of dimers.

The protein localises to the cytoplasm. The enzyme catalyses L-aspartate 4-semialdehyde + pyruvate = (2S,4S)-4-hydroxy-2,3,4,5-tetrahydrodipicolinate + H2O + H(+). Its pathway is amino-acid biosynthesis; L-lysine biosynthesis via DAP pathway; (S)-tetrahydrodipicolinate from L-aspartate: step 3/4. In terms of biological role, catalyzes the condensation of (S)-aspartate-beta-semialdehyde [(S)-ASA] and pyruvate to 4-hydroxy-tetrahydrodipicolinate (HTPA). The chain is 4-hydroxy-tetrahydrodipicolinate synthase from Pediococcus pentosaceus (strain ATCC 25745 / CCUG 21536 / LMG 10740 / 183-1w).